A 439-amino-acid polypeptide reads, in one-letter code: Histidine--tRNA ligase (439 aa).

It belongs to the class-II aminoacyl-tRNA synthetase family. As to quaternary structure, homodimer.

The protein localises to the cytoplasm. It catalyses the reaction tRNA(His) + L-histidine + ATP = L-histidyl-tRNA(His) + AMP + diphosphate + H(+). This chain is Histidine--tRNA ligase, found in Clostridium tetani (strain Massachusetts / E88).